The following is a 195-amino-acid chain: Der GTPase-activating protein YihI (195 aa).

Residues 1–81 form a disordered region; sequence MSRTKKTRRI…KAVVKEVKDP (81 aa). 3 stretches are compositionally biased toward basic and acidic residues: residues 9–23, 38–49, and 66–81; these read RITDIMPARKTDKPK, TRYELDAQAREE, and DPAEQKKAVVKEVKDP.

The protein belongs to the YihI family. As to quaternary structure, interacts with Der.

Its function is as follows. A GTPase-activating protein (GAP) that modifies Der/EngA GTPase function. May play a role in ribosome biogenesis. The sequence is that of Der GTPase-activating protein YihI from Mannheimia haemolytica (Pasteurella haemolytica).